The chain runs to 236 residues: Ribonuclease PH (236 aa).

Residues R86 and 124–126 contribute to the phosphate site; that span reads GTR.

It belongs to the RNase PH family. In terms of assembly, homohexameric ring arranged as a trimer of dimers.

The enzyme catalyses tRNA(n+1) + phosphate = tRNA(n) + a ribonucleoside 5'-diphosphate. Phosphorolytic 3'-5' exoribonuclease that plays an important role in tRNA 3'-end maturation. Removes nucleotide residues following the 3'-CCA terminus of tRNAs; can also add nucleotides to the ends of RNA molecules by using nucleoside diphosphates as substrates, but this may not be physiologically important. Probably plays a role in initiation of 16S rRNA degradation (leading to ribosome degradation) during starvation. The protein is Ribonuclease PH of Thermodesulfovibrio yellowstonii (strain ATCC 51303 / DSM 11347 / YP87).